The chain runs to 57 residues: uncharacterized protein (57 aa).

The disordered stretch occupies residues Met1 to Tyr57. Residues Pro10 to Pro22 show a composition bias toward basic residues. Low complexity predominate over residues Arg23 to Ser34. Residues Pro35 to Arg51 show a composition bias toward basic residues.

This is an uncharacterized protein from Acheta domesticus (House cricket).